We begin with the raw amino-acid sequence, 67 residues long: Large ribosomal subunit protein bL32 (67 aa).

Over residues Met1–Gln19 the composition is skewed to basic residues. Residues Met1–Lys21 form a disordered region.

It belongs to the bacterial ribosomal protein bL32 family.

The sequence is that of Large ribosomal subunit protein bL32 from Clavibacter michiganensis subsp. michiganensis (strain NCPPB 382).